Reading from the N-terminus, the 429-residue chain is Enolase (429 aa).

Q163 lines the (2R)-2-phosphoglycerate pocket. E205 serves as the catalytic Proton donor. Mg(2+)-binding residues include D242, E287, and D314. Positions 339, 368, 369, and 390 each coordinate (2R)-2-phosphoglycerate. The active-site Proton acceptor is the K339.

The protein belongs to the enolase family. It depends on Mg(2+) as a cofactor.

It is found in the cytoplasm. The protein resides in the secreted. It localises to the cell surface. The catalysed reaction is (2R)-2-phosphoglycerate = phosphoenolpyruvate + H2O. The protein operates within carbohydrate degradation; glycolysis; pyruvate from D-glyceraldehyde 3-phosphate: step 4/5. In terms of biological role, catalyzes the reversible conversion of 2-phosphoglycerate (2-PG) into phosphoenolpyruvate (PEP). It is essential for the degradation of carbohydrates via glycolysis. The sequence is that of Enolase from Cupriavidus pinatubonensis (strain JMP 134 / LMG 1197) (Cupriavidus necator (strain JMP 134)).